Consider the following 356-residue polypeptide: GTPase HflX (356 aa).

The 177-residue stretch at 180–356 (PSIGIVGYTN…KIYQLATQLS (177 aa)) folds into the Hflx-type G domain. Residues 186–193 (GYTNSGKT), 211–215 (FTTMS), 232–235 (DTVG), 300–303 (NKID), and 334–336 (SAL) contribute to the GTP site. Mg(2+)-binding residues include Thr-193 and Thr-213.

The protein belongs to the TRAFAC class OBG-HflX-like GTPase superfamily. HflX GTPase family. In terms of assembly, monomer. Associates with the 50S ribosomal subunit. Does not associate with 70S ribosomes. Mg(2+) is required as a cofactor.

The protein resides in the cytoplasm. Its activity is regulated as follows. GTPase activity is stimulated by the presence of 50S ribosomal subunits. Hydrolysis is probably regulated by the HflX N-terminal domain. Its function is as follows. GTPase that associates with the 50S ribosomal subunit and may have a role during protein synthesis or ribosome biogenesis. Specific for GTP. This Saccharolobus solfataricus (strain ATCC 35092 / DSM 1617 / JCM 11322 / P2) (Sulfolobus solfataricus) protein is GTPase HflX.